Reading from the N-terminus, the 196-residue chain is N-(5'-phosphoribosyl)anthranilate isomerase (196 aa).

It belongs to the TrpF family.

It carries out the reaction N-(5-phospho-beta-D-ribosyl)anthranilate = 1-(2-carboxyphenylamino)-1-deoxy-D-ribulose 5-phosphate. Its pathway is amino-acid biosynthesis; L-tryptophan biosynthesis; L-tryptophan from chorismate: step 3/5. The sequence is that of N-(5'-phosphoribosyl)anthranilate isomerase from Sulfurovum sp. (strain NBC37-1).